The following is a 334-amino-acid chain: GTP 3',8-cyclase (334 aa).

The 226-residue stretch at 11-236 (GFNRKIDYLR…ESTESSMGPA (226 aa)) folds into the Radical SAM core domain. Arg20 lines the GTP pocket. Residues Cys27 and Cys31 each coordinate [4Fe-4S] cluster. Residue Tyr33 coordinates S-adenosyl-L-methionine. A [4Fe-4S] cluster-binding site is contributed by Cys34. Arg69 contributes to the GTP binding site. Gly73 is a binding site for S-adenosyl-L-methionine. GTP is bound at residue Thr100. Residue Ser124 coordinates S-adenosyl-L-methionine. Residue Lys161 participates in GTP binding. Met195 lines the S-adenosyl-L-methionine pocket. The [4Fe-4S] cluster site is built by Cys260 and Cys263. 265–267 (RVR) contributes to the GTP binding site. Cys277 contributes to the [4Fe-4S] cluster binding site.

This sequence belongs to the radical SAM superfamily. MoaA family. Monomer and homodimer. [4Fe-4S] cluster is required as a cofactor.

It carries out the reaction GTP + AH2 + S-adenosyl-L-methionine = (8S)-3',8-cyclo-7,8-dihydroguanosine 5'-triphosphate + 5'-deoxyadenosine + L-methionine + A + H(+). It participates in cofactor biosynthesis; molybdopterin biosynthesis. In terms of biological role, catalyzes the cyclization of GTP to (8S)-3',8-cyclo-7,8-dihydroguanosine 5'-triphosphate. The polypeptide is GTP 3',8-cyclase (Pseudomonas putida (strain ATCC 700007 / DSM 6899 / JCM 31910 / BCRC 17059 / LMG 24140 / F1)).